The sequence spans 148 residues: Cytochrome c oxidase subunit 4, mitochondrial (148 aa).

A mitochondrion-targeting transit peptide spans 1-24; it reads MFALRSIRSATKAFQTTSIVSQRG.

Slime mold cytochrome c oxidase consists of at least seven different polypeptides species, subunits I, II, III, IV, V, VI, and VIIe/s in order of MW.

It localises to the mitochondrion inner membrane. It carries out the reaction 4 Fe(II)-[cytochrome c] + O2 + 8 H(+)(in) = 4 Fe(III)-[cytochrome c] + 2 H2O + 4 H(+)(out). This protein is one of the nuclear-coded polypeptide chains of cytochrome c oxidase, the terminal oxidase in mitochondrial electron transport. The sequence is that of Cytochrome c oxidase subunit 4, mitochondrial (cxdA) from Dictyostelium discoideum (Social amoeba).